The following is a 101-amino-acid chain: MAKVSMVERERKRQKTVRRFAAKREALKAIINSVDATQQERFEAQLKLQKLPRDSSPVRGRNRCRVTGRPRGYYRKFGLGRNKLREAAMNGEIPGLVKSSW.

It belongs to the universal ribosomal protein uS14 family. As to quaternary structure, part of the 30S ribosomal subunit. Contacts proteins S3 and S10.

Functionally, binds 16S rRNA, required for the assembly of 30S particles and may also be responsible for determining the conformation of the 16S rRNA at the A site. This chain is Small ribosomal subunit protein uS14, found in Alkalilimnicola ehrlichii (strain ATCC BAA-1101 / DSM 17681 / MLHE-1).